The chain runs to 309 residues: Manganese ABC transporter substrate-binding lipoprotein PsaA (309 aa).

The N-terminal stretch at 1 to 19 (MKKLGTLLVLFLSAIILVA) is a signal peptide. Cys20 carries the N-palmitoyl cysteine lipid modification. Cys20 carries the S-diacylglycerol cysteine lipid modification. Residues His67, His139, Glu205, and Asp280 each coordinate Mn(2+).

This sequence belongs to the bacterial solute-binding protein 9 family. Lipoprotein receptor antigen (Lrai) subfamily.

The protein localises to the cell membrane. Part of the ATP-binding cassette (ABC) transport system PsaABC involved in manganese import. Binds manganese with high affinity and specificity and delivers it to the membrane permease for translocation into the cytoplasm. Also acts as an adhesin which is involved on adherence to extracellular matrix. It is an important factor in pathogenesis and infection. In Streptococcus pneumoniae serotype 4 (strain ATCC BAA-334 / TIGR4), this protein is Manganese ABC transporter substrate-binding lipoprotein PsaA (psaA).